The chain runs to 220 residues: StAR-related lipid transfer protein 6 (220 aa).

One can recognise an START domain in the interval 1-208; sequence MDFKAIAQQT…AKDGIKAHRT (208 aa).

May be involved in the intracellular transport of sterols or other lipids. May bind cholesterol or other sterols. This Homo sapiens (Human) protein is StAR-related lipid transfer protein 6 (STARD6).